A 67-amino-acid polypeptide reads, in one-letter code: UPF0337 protein Atu4724 (67 aa).

The protein belongs to the UPF0337 (CsbD) family.

This chain is UPF0337 protein Atu4724, found in Agrobacterium fabrum (strain C58 / ATCC 33970) (Agrobacterium tumefaciens (strain C58)).